Consider the following 251-residue polypeptide: CDP-diacylglycerol pyrophosphatase (251 aa).

A helical transmembrane segment spans residues 4 to 24; it reads AGLLFLVMIVIAVVAAGIGYW.

It belongs to the Cdh family.

The protein localises to the cell inner membrane. It catalyses the reaction a CDP-1,2-diacyl-sn-glycerol + H2O = a 1,2-diacyl-sn-glycero-3-phosphate + CMP + 2 H(+). It participates in phospholipid metabolism; CDP-diacylglycerol degradation; phosphatidate from CDP-diacylglycerol: step 1/1. This chain is CDP-diacylglycerol pyrophosphatase, found in Shigella boydii serotype 4 (strain Sb227).